The primary structure comprises 493 residues: Glutamyl-tRNA(Gln) amidotransferase subunit A (493 aa).

Catalysis depends on charge relay system residues Lys79 and Ser159. Residue Ser183 is the Acyl-ester intermediate of the active site.

It belongs to the amidase family. GatA subfamily. As to quaternary structure, heterotrimer of A, B and C subunits.

It carries out the reaction L-glutamyl-tRNA(Gln) + L-glutamine + ATP + H2O = L-glutaminyl-tRNA(Gln) + L-glutamate + ADP + phosphate + H(+). In terms of biological role, allows the formation of correctly charged Gln-tRNA(Gln) through the transamidation of misacylated Glu-tRNA(Gln) in organisms which lack glutaminyl-tRNA synthetase. The reaction takes place in the presence of glutamine and ATP through an activated gamma-phospho-Glu-tRNA(Gln). The protein is Glutamyl-tRNA(Gln) amidotransferase subunit A of Rhizobium leguminosarum bv. trifolii (strain WSM2304).